Here is a 104-residue protein sequence, read N- to C-terminus: Large ribosomal subunit protein uL24 (104 aa).

This sequence belongs to the universal ribosomal protein uL24 family. As to quaternary structure, part of the 50S ribosomal subunit.

In terms of biological role, one of two assembly initiator proteins, it binds directly to the 5'-end of the 23S rRNA, where it nucleates assembly of the 50S subunit. One of the proteins that surrounds the polypeptide exit tunnel on the outside of the subunit. The polypeptide is Large ribosomal subunit protein uL24 (Bartonella tribocorum (strain CIP 105476 / IBS 506)).